The primary structure comprises 209 residues: 3-demethoxyubiquinol 3-hydroxylase (209 aa).

Fe cation-binding residues include E58, E88, H91, E140, E172, and H175.

The protein belongs to the COQ7 family. Requires Fe cation as cofactor.

It is found in the cell membrane. It catalyses the reaction a 5-methoxy-2-methyl-3-(all-trans-polyprenyl)benzene-1,4-diol + AH2 + O2 = a 3-demethylubiquinol + A + H2O. It participates in cofactor biosynthesis; ubiquinone biosynthesis. Its function is as follows. Catalyzes the hydroxylation of 2-nonaprenyl-3-methyl-6-methoxy-1,4-benzoquinol during ubiquinone biosynthesis. The protein is 3-demethoxyubiquinol 3-hydroxylase of Polynucleobacter asymbioticus (strain DSM 18221 / CIP 109841 / QLW-P1DMWA-1) (Polynucleobacter necessarius subsp. asymbioticus).